Consider the following 61-residue polypeptide: Small ribosomal subunit protein uS14B (61 aa).

Residues Cys-24, Cys-27, Cys-40, and Cys-43 each contribute to the Zn(2+) site.

Belongs to the universal ribosomal protein uS14 family. Zinc-binding uS14 subfamily. As to quaternary structure, part of the 30S ribosomal subunit. Contacts proteins S3 and S10. Zn(2+) is required as a cofactor.

Functionally, binds 16S rRNA, required for the assembly of 30S particles and may also be responsible for determining the conformation of the 16S rRNA at the A site. In Streptococcus agalactiae serotype Ia (strain ATCC 27591 / A909 / CDC SS700), this protein is Small ribosomal subunit protein uS14B.